The following is a 162-amino-acid chain: Putative colanic acid biosynthesis acetyltransferase WcaB (162 aa).

It belongs to the transferase hexapeptide repeat family.

The protein operates within slime biogenesis; slime polysaccharide biosynthesis. The protein is Putative colanic acid biosynthesis acetyltransferase WcaB (wcaB) of Escherichia coli O157:H7.